A 389-amino-acid polypeptide reads, in one-letter code: Glycerol-3-phosphate dehydrogenase [NAD(+)] 2 (389 aa).

Residues 40 to 45 (GSGNWG), phenylalanine 128, lysine 151, and alanine 184 contribute to the NAD(+) site. Lysine 151 contacts substrate. The active-site Proton acceptor is the lysine 244. Arginine 309 and glutamine 338 together coordinate NAD(+). Residue 309-310 (RN) participates in substrate binding.

Belongs to the NAD-dependent glycerol-3-phosphate dehydrogenase family.

It is found in the cytoplasm. It carries out the reaction sn-glycerol 3-phosphate + NAD(+) = dihydroxyacetone phosphate + NADH + H(+). The sequence is that of Glycerol-3-phosphate dehydrogenase [NAD(+)] 2 (GPD2) from Zygosaccharomyces rouxii.